The following is a 241-amino-acid chain: Major prion protein (241 aa).

Residues 1 to 15 form the signal peptide; sequence MLVLFVATWSDLGLC. The interaction with ADGRG6 stretch occupies residues 16–31; it reads KKRPKPGGWNTGGSRY. Residues 16-223 are interaction with GRB2, ERI3 and SYN1; it reads KKRPKPGGWN…ESQAYYQRGS (208 aa). The disordered stretch occupies residues 18–101; sequence RPKPGGWNTG…WHKPNKPKTS (84 aa). A run of 5 repeats spans residues 44–52, 53–60, 61–68, 69–76, and 77–84. The segment at 44–84 is 5 X 8 AA tandem repeats of P-H-G-G-G-W-G-Q; that stretch reads PQGGGGWGQPHGGGWGQPHGGGWGQPHGGGWGQPHGGGWGQ. A compositionally biased stretch (gly residues) spans 45–88; the sequence is QGGGGWGQPHGGGWGQPHGGGWGQPHGGGWGQPHGGGWGQGGGT. Positions 54, 55, 56, 62, 63, 64, 70, 71, 72, 78, 79, and 80 each coordinate Cu(2+). Over residues 91–101 the composition is skewed to basic residues; that stretch reads QWHKPNKPKTS. Residues Cys-172 and Cys-207 are joined by a disulfide bond. 2 N-linked (GlcNAc...) asparagine glycosylation sites follow: Asn-174 and Asn-190. The GPI-anchor amidated serine moiety is linked to residue Ser-223. Residues 224-241 constitute a propeptide, removed in mature form; it reads SMVLFSSPPVILLISFLI.

This sequence belongs to the prion family. Monomer and homodimer. Has a tendency to aggregate into amyloid fibrils containing a cross-beta spine, formed by a steric zipper of superposed beta-strands. Soluble oligomers may represent an intermediate stage on the path to fibril formation. Copper binding may promote oligomerization. Interacts with GRB2, APP, ERI3/PRNPIP and SYN1. Mislocalized cytosolically exposed PrP interacts with MGRN1; this interaction alters MGRN1 subcellular location and causes lysosomal enlargement. Interacts with APP. Interacts with KIAA1191. Interacts with ADGRG6.

Its subcellular location is the cell membrane. It localises to the golgi apparatus. In terms of biological role, its primary physiological function is unclear. May play a role in neuronal development and synaptic plasticity. May be required for neuronal myelin sheath maintenance. May promote myelin homeostasis through acting as an agonist for ADGRG6 receptor. May play a role in iron uptake and iron homeostasis. Soluble oligomers are toxic to cultured neuroblastoma cells and induce apoptosis (in vitro). Association with GPC1 (via its heparan sulfate chains) targets PRNP to lipid rafts. Also provides Cu(2+) or Zn(2+) for the ascorbate-mediated GPC1 deaminase degradation of its heparan sulfate side chains. In Mandrillus sphinx (Mandrill), this protein is Major prion protein (PRNP).